The following is a 229-amino-acid chain: RNA pyrophosphohydrolase (229 aa).

The Nudix hydrolase domain maps to Gly-6–Thr-149. Positions Gly-38 to Gly-59 match the Nudix box motif. The segment at Ser-168–Ala-229 is disordered.

The protein belongs to the Nudix hydrolase family. RppH subfamily. Requires a divalent metal cation as cofactor.

Accelerates the degradation of transcripts by removing pyrophosphate from the 5'-end of triphosphorylated RNA, leading to a more labile monophosphorylated state that can stimulate subsequent ribonuclease cleavage. The sequence is that of RNA pyrophosphohydrolase from Delftia acidovorans (strain DSM 14801 / SPH-1).